The primary structure comprises 261 residues: Hemin import ATP-binding protein HmuV (261 aa).

The ABC transporter domain occupies 3–239 (LDAADITVKL…AILSQAYGCA (237 aa)). 35–42 (GPNGSGKT) contacts ATP.

This sequence belongs to the ABC transporter superfamily. Heme (hemin) importer (TC 3.A.1.14.5) family. The complex is composed of two ATP-binding proteins (HmuV), two transmembrane proteins (HmuU) and a solute-binding protein (HmuT).

Its subcellular location is the cell inner membrane. In terms of biological role, part of the ABC transporter complex HmuTUV involved in hemin import. Responsible for energy coupling to the transport system. The protein is Hemin import ATP-binding protein HmuV of Roseobacter denitrificans (strain ATCC 33942 / OCh 114) (Erythrobacter sp. (strain OCh 114)).